A 290-amino-acid chain; its full sequence is Pre-mRNA-splicing factor cwf20 (290 aa).

2 disordered regions span residues 1–61 and 114–134; these read MSLV…KSSF and PNNSVSDLTSTGSSETVKKST. Polar residues predominate over residues 114–128; the sequence is PNNSVSDLTSTGSSE.

Belongs to the 40S cdc5-associated complex (or cwf complex), a spliceosome sub-complex reminiscent of a late-stage spliceosome composed of the U2, U5 and U6 snRNAs and at least brr2, cdc5, cwf2/prp3, cwf3/syf1, cwf4/syf3, cwf5/ecm2, spp42/cwf6, cwf7/spf27, cwf8, cwf9, cwf10, cwf11, cwf12, prp45/cwf13, cwf14, cwf15, cwf16, cwf17, cwf18, cwf19, cwf20, cwf21, cwf22, cwf23, cwf24, cwf25, cwf26, cyp7/cwf27, cwf28, cwf29/ist3, lea1, msl1, prp5/cwf1, prp10, prp12/sap130, prp17, prp22, sap61, sap62, sap114, sap145, slu7, smb1, smd1, smd3, smf1, smg1 and syf2.

It is found in the nucleus. In terms of biological role, involved in mRNA splicing where it associates with cdc5 and the other cwf proteins as part of the spliceosome. The sequence is that of Pre-mRNA-splicing factor cwf20 (cwf20) from Schizosaccharomyces pombe (strain 972 / ATCC 24843) (Fission yeast).